Reading from the N-terminus, the 130-residue chain is Small ribosomal subunit protein uS11 (130 aa).

This sequence belongs to the universal ribosomal protein uS11 family. In terms of assembly, part of the 30S ribosomal subunit. Interacts with proteins S7 and S18. Binds to IF-3.

Its function is as follows. Located on the platform of the 30S subunit, it bridges several disparate RNA helices of the 16S rRNA. Forms part of the Shine-Dalgarno cleft in the 70S ribosome. The polypeptide is Small ribosomal subunit protein uS11 (Lactobacillus helveticus (strain DPC 4571)).